We begin with the raw amino-acid sequence, 179 residues long: Large ribosomal subunit protein uL5 (179 aa).

This sequence belongs to the universal ribosomal protein uL5 family. In terms of assembly, part of the 50S ribosomal subunit; part of the 5S rRNA/L5/L18/L25 subcomplex. Contacts the 5S rRNA and the P site tRNA. Forms a bridge to the 30S subunit in the 70S ribosome.

This is one of the proteins that bind and probably mediate the attachment of the 5S RNA into the large ribosomal subunit, where it forms part of the central protuberance. In the 70S ribosome it contacts protein S13 of the 30S subunit (bridge B1b), connecting the 2 subunits; this bridge is implicated in subunit movement. Contacts the P site tRNA; the 5S rRNA and some of its associated proteins might help stabilize positioning of ribosome-bound tRNAs. This is Large ribosomal subunit protein uL5 from Listeria innocua serovar 6a (strain ATCC BAA-680 / CLIP 11262).